The primary structure comprises 509 residues: Dihydrolipoyl dehydrogenase, mitochondrial (509 aa).

Residues 1-35 (MQSWSRVYCSLVKRGHFSRISHGLQGVSVVPLRTY) constitute a mitochondrion transit peptide. At Lys-66 the chain carries N6-acetyllysine; alternate. Lys-66 carries the N6-succinyllysine; alternate modification. FAD contacts are provided by residues 71–80 (EKNETLGGTC) and Lys-89. Cys-80 and Cys-85 are joined by a disulfide. Residues Lys-104, Lys-122, Lys-132, and Lys-143 each carry the N6-acetyllysine; alternate modification. N6-succinyllysine; alternate is present on residues Lys-104, Lys-122, Lys-132, and Lys-143. Position 154 (Gly-154) interacts with FAD. 2 positions are modified to N6-succinyllysine: Lys-159 and Lys-166. 183–185 (TGS) is an FAD binding site. Residues 220 to 227 (GAGVIGVE) and Glu-243 each bind NAD(+). 2 positions are modified to N6-succinyllysine: Lys-273 and Lys-277. Val-278 provides a ligand contact to NAD(+). Residues Ser-285 and Ser-297 each carry the phosphoserine modification. Residue Gly-314 participates in NAD(+) binding. Lys-346 is subject to N6-acetyllysine. FAD is bound by residues Asp-355 and 361–364 (MLAH). N6-acetyllysine; alternate is present on Lys-410. The residue at position 410 (Lys-410) is an N6-succinyllysine; alternate. 2 positions are modified to N6-acetyllysine: Lys-417 and Lys-420. Lys-430 carries the N6-succinyllysine modification. His-487 functions as the Proton acceptor in the catalytic mechanism. An N6-acetyllysine; alternate modification is found at Lys-505. Lys-505 bears the N6-succinyllysine; alternate mark.

The protein belongs to the class-I pyridine nucleotide-disulfide oxidoreductase family. Homodimer. Part of the multimeric pyruvate dehydrogenase complex that contains multiple copies of pyruvate dehydrogenase (subunits PDHA (PDHA1 or PDHA2) and PDHB, E1), dihydrolipoamide acetyltransferase (DLAT, E2) and lipoamide dehydrogenase (DLD, E3). These subunits are bound to an inner core composed of about 48 DLAT and 12 PDHX molecules (by non covalent bonds). The 2-oxoglutarate dehydrogenase complex is composed of OGDH (2-oxoglutarate dehydrogenase; E1), DLST (dihydrolipoamide succinyltransferase; E2), DLD (dihydrolipoamide dehydrogenase; E3) and the assembly factor KGD4. It contains multiple copies of the three enzymatic components (E1, E2 and E3). In the nucleus, the 2-oxoglutarate dehydrogenase complex associates with KAT2A. Interacts with PDHX. Requires FAD as cofactor. In terms of processing, tyrosine phosphorylated.

It localises to the mitochondrion matrix. It is found in the nucleus. The protein localises to the cell projection. The protein resides in the cilium. Its subcellular location is the flagellum. It localises to the cytoplasmic vesicle. It is found in the secretory vesicle. The protein localises to the acrosome. It carries out the reaction N(6)-[(R)-dihydrolipoyl]-L-lysyl-[protein] + NAD(+) = N(6)-[(R)-lipoyl]-L-lysyl-[protein] + NADH + H(+). In terms of biological role, lipoamide dehydrogenase is a component of the glycine cleavage system as well as an E3 component of three alpha-ketoacid dehydrogenase complexes (pyruvate-, alpha-ketoglutarate-, and branched-chain amino acid-dehydrogenase complex). The 2-oxoglutarate dehydrogenase complex is mainly active in the mitochondrion. A fraction of the 2-oxoglutarate dehydrogenase complex also localizes in the nucleus and is required for lysine succinylation of histones: associates with KAT2A on chromatin and provides succinyl-CoA to histone succinyltransferase KAT2A. In monomeric form may have additional moonlighting function as serine protease. Involved in the hyperactivation of spermatazoa during capacitation and in the spermatazoal acrosome reaction. The polypeptide is Dihydrolipoyl dehydrogenase, mitochondrial (DLD) (Bos taurus (Bovine)).